A 63-amino-acid chain; its full sequence is Conotoxin Cal6.28 (63 aa).

The signal sequence occupies residues 1–22; it reads MKLTCVLIVAVLILTACQVIAA. Intrachain disulfides connect cysteine 34-cysteine 45, cysteine 37-cysteine 51, and cysteine 44-cysteine 58.

Belongs to the conotoxin O1 superfamily. As to expression, expressed by the venom duct.

The protein localises to the secreted. Probable neurotoxin. In Californiconus californicus (California cone), this protein is Conotoxin Cal6.28.